We begin with the raw amino-acid sequence, 275 residues long: U6 snRNA phosphodiesterase 1 (275 aa).

Residues 1-25 are disordered; it reads MEFLKHYEDDEDQDDENNTKDENVN. Catalysis depends on H122, which acts as the Proton acceptor. AMP is bound by residues 122 to 124, Y206, and 208 to 214; these read HIS and NPEPHLS. UMP contacts are provided by residues Y206 and 210-214; that span reads EPHLS. The active-site Proton donor is the H212.

Belongs to the 2H phosphoesterase superfamily. USB1 family.

Its subcellular location is the nucleus. The enzyme catalyses a 3'-end uridylyl-uridine-RNA = a 3'-end 2',3'-cyclophospho-uridine-RNA + uridine. Functionally, 3'-5' RNA exonuclease that trims the 3' end of oligo(U) tracts of the pre-U6 small nuclear RNA (snRNA) molecule, leading to the formation of a mature U6 snRNA 3' end-terminated with a 2',3'-cyclic phosphate. Participates in the U6 snRNA 3' end processing that prevents U6 snRNA degradation. The polypeptide is U6 snRNA phosphodiesterase 1 (Dictyostelium discoideum (Social amoeba)).